Reading from the N-terminus, the 85-residue chain is Large ribosomal subunit protein bL27 (85 aa).

The interval 1–23 (MAHKKAGGSSRNGRDSESKRLGV) is disordered.

Belongs to the bacterial ribosomal protein bL27 family.

The polypeptide is Large ribosomal subunit protein bL27 (Methylococcus capsulatus (strain ATCC 33009 / NCIMB 11132 / Bath)).